Reading from the N-terminus, the 331-residue chain is Mitochondrial respiration co-chaperone MRJ1 (331 aa).

Residues 1 to 36 (MLSFQATVRPLAVSSRLHSPAAHIWRRNAHTAAMSD) constitute a mitochondrion transit peptide. The segment at 35-66 (SDDSLDQGSSSSYGDSASQPHLGKGKGRQDSL) is disordered. The segment covering 40–53 (DQGSSSSYGDSASQ) has biased composition (low complexity). The J domain occupies 83–147 (DPFEVMALDR…SSRSAFLKTG (65 aa)). Positions 203-226 (DGSQGWRPYEDPSKGFSPPTSGPA) are disordered. Residues 275–303 (RALAQARYEAATHGHIRREQIRRRVREAE) enclose the IQ domain.

The protein belongs to the DnaJ family. In terms of assembly, interacts with QCR2.

Its subcellular location is the mitochondrion. Functionally, mitochondrial co-chaperone required for ubiquinol-cytochrome c oxidoreductase (mitochondrial respiratory chain complex III) activity. The sequence is that of Mitochondrial respiration co-chaperone MRJ1 from Cryptococcus neoformans var. grubii serotype A (strain H99 / ATCC 208821 / CBS 10515 / FGSC 9487) (Filobasidiella neoformans var. grubii).